We begin with the raw amino-acid sequence, 400 residues long: CCA-adding enzyme (400 aa).

ATP contacts are provided by G28 and R31. CTP-binding residues include G28 and R31. D41 and D43 together coordinate Mg(2+). ATP-binding residues include R112, D155, R158, R161, and R164. CTP is bound by residues R112, D155, R158, R161, and R164.

The protein belongs to the tRNA nucleotidyltransferase/poly(A) polymerase family. Bacterial CCA-adding enzyme type 3 subfamily. As to quaternary structure, homodimer. Mg(2+) serves as cofactor.

The enzyme catalyses a tRNA precursor + 2 CTP + ATP = a tRNA with a 3' CCA end + 3 diphosphate. The catalysed reaction is a tRNA with a 3' CCA end + 2 CTP + ATP = a tRNA with a 3' CCACCA end + 3 diphosphate. Functionally, catalyzes the addition and repair of the essential 3'-terminal CCA sequence in tRNAs without using a nucleic acid template. Adds these three nucleotides in the order of C, C, and A to the tRNA nucleotide-73, using CTP and ATP as substrates and producing inorganic pyrophosphate. tRNA 3'-terminal CCA addition is required both for tRNA processing and repair. Also involved in tRNA surveillance by mediating tandem CCA addition to generate a CCACCA at the 3' terminus of unstable tRNAs. While stable tRNAs receive only 3'-terminal CCA, unstable tRNAs are marked with CCACCA and rapidly degraded. The sequence is that of CCA-adding enzyme from Staphylococcus aureus (strain bovine RF122 / ET3-1).